The primary structure comprises 251 residues: Pyrroloquinoline-quinone synthase (251 aa).

The protein belongs to the PqqC family.

The catalysed reaction is 6-(2-amino-2-carboxyethyl)-7,8-dioxo-1,2,3,4,7,8-hexahydroquinoline-2,4-dicarboxylate + 3 O2 = pyrroloquinoline quinone + 2 H2O2 + 2 H2O + H(+). The protein operates within cofactor biosynthesis; pyrroloquinoline quinone biosynthesis. Functionally, ring cyclization and eight-electron oxidation of 3a-(2-amino-2-carboxyethyl)-4,5-dioxo-4,5,6,7,8,9-hexahydroquinoline-7,9-dicarboxylic-acid to PQQ. This is Pyrroloquinoline-quinone synthase from Pseudomonas savastanoi pv. phaseolicola (strain 1448A / Race 6) (Pseudomonas syringae pv. phaseolicola (strain 1448A / Race 6)).